The sequence spans 361 residues: Basic helix-loop-helix protein 79 (361 aa).

Positions 66 to 159 (APEASNGSGS…ASTVTAGQKT (94 aa)) are disordered. The segment covering 124 to 138 (GRPERARPGAKKKAE) has biased composition (basic and acidic residues). Residues 146–157 (PATSASTVTAGQ) are compositionally biased toward polar residues. The short motif at 166-173 (ARRGQATD) is the Nuclear localization signal element. The interval 170–183 (QATDSHSLAERVRR) is basic motif; degenerate. Residues 170 to 220 (QATDSHSLAERVRRERISERMRYLQELVPGCNKVTGKAGMLDEIINYVQSL) enclose the bHLH domain. Residues 184–220 (ERISERMRYLQELVPGCNKVTGKAGMLDEIINYVQSL) form a helix-loop-helix motif region.

It belongs to the bHLH protein family. As to quaternary structure, homodimer. Interacts with IBH1.

Its subcellular location is the nucleus. Functionally, together with BCL1, positive regulator of cell elongation at least partially through increased gibberellic acid (GA) biosynthesis. The polypeptide is Basic helix-loop-helix protein 79 (Oryza sativa subsp. indica (Rice)).